The primary structure comprises 406 residues: 4-O-methyl-glucuronoyl methylesterase (406 aa).

The signal sequence occupies residues 1 to 17; it reads MAFRWLSFLLLALPVLA. The cysteines at positions 31 and 64 are disulfide-linked. N-linked (GlcNAc...) asparagine glycosylation is found at asparagine 100, asparagine 110, asparagine 122, and asparagine 178. A GXSYXG catalytic site motif motif is present at residues 215–220; that stretch reads GCSRDG. Disulfide bonds link cysteine 216-cysteine 352 and cysteine 248-cysteine 324. Serine 217 (nucleophile) is an active-site residue. Substrate-binding residues include lysine 221, glutamine 263, and glutamate 271. The N-linked (GlcNAc...) asparagine glycan is linked to asparagine 285. Tryptophan 315 contributes to the substrate binding site. Asparagine 348 carries N-linked (GlcNAc...) asparagine glycosylation. Residue histidine 351 is the Proton donor/acceptor of the active site. N-linked (GlcNAc...) asparagine glycans are attached at residues asparagine 376, asparagine 387, and asparagine 398.

The protein belongs to the carbohydrate esterase 15 (CE15) family.

The protein localises to the secreted. It catalyses the reaction a 4-O-methyl-alpha-D-glucuronosyl ester derivative + H2O = 4-O-methyl-alpha-D-glucuronate derivative + an alcohol + H(+). Functionally, glucuronoyl esterase which may play a significant role in biomass degradation, as it is considered to disconnect hemicellulose from lignin through the hydrolysis of the ester bond between 4-O-methyl-D-glucuronic acid residues of glucuronoxylans and aromatic alcohols of lignin. The polypeptide is 4-O-methyl-glucuronoyl methylesterase (Phanerochaete carnosa (strain HHB-10118-sp) (White-rot fungus)).